Reading from the N-terminus, the 533-residue chain is Beta-1,4-mannosyl-glycoprotein 4-beta-N-acetylglucosaminyltransferase (533 aa).

The Cytoplasmic segment spans residues 1–7 (MKMRRYK). The helical; Signal-anchor for type II membrane protein transmembrane segment at 8–23 (LFLMFCMAGLCLISFL) threads the bilayer. Residues 24-533 (HFFKTLSYVT…ARGKLDEAEV (510 aa)) lie on the Lumenal side of the membrane. Residues 119–158 (KPGTKMLERPPPGRPEEKPEGANGSSARRPPRYLLSARER) form a disordered region. Residues Asn-141, Asn-241, Asn-259, and Asn-397 are each glycosylated (N-linked (GlcNAc...) asparagine). Positions 507–533 (STAAGGWRHRGPEGRPPARGKLDEAEV) are disordered.

Belongs to the glycosyltransferase 17 family. Interacts with MGAT4D.

It localises to the golgi apparatus membrane. The catalysed reaction is N(4)-{beta-D-GlcNAc-(1-&gt;2)-alpha-D-Man-(1-&gt;3)-[beta-D-GlcNAc-(1-&gt;2)-alpha-D-Man-(1-&gt;6)]-beta-D-Man-(1-&gt;4)-beta-D-GlcNAc-(1-&gt;4)-beta-D-GlcNAc}-L-asparaginyl-[protein] + UDP-N-acetyl-alpha-D-glucosamine = N(4)-{beta-D-GlcNAc-(1-&gt;2)-alpha-D-Man-(1-&gt;3)-[beta-D-GlcNAc-(1-&gt;4)]-[beta-D-GlcNAc-(1-&gt;2)-alpha-D-Man-(1-&gt;6)]-beta-D-Man-(1-&gt;4)-beta-D-GlcNAc-(1-&gt;4)-beta-D-GlcNAc}-L-asparaginyl-[protein] + UDP + H(+). It participates in protein modification; protein glycosylation. Functionally, it is involved in the regulation of the biosynthesis and biological function of glycoprotein oligosaccharides. Catalyzes the addition of N-acetylglucosamine in beta 1-4 linkage to the beta-linked mannose of the trimannosyl core of N-linked sugar chains, called bisecting N-acetylglucosamine (GlcNAc). It is one of the most important enzymes involved in the regulation of the biosynthesis of glycoprotein oligosaccharides. The addition of this bisecting GlcNAc residue alters not only the composition, but also the conformation of the N-glycan. The introduction of the bisecting GlcNAc residue results in the suppression of further processing and elongation of N-glycans, precluding the formation of beta-1,6 GlcNAc branching, catalyzed by MGAT5 since it is unable to use the bisected oligosaccharide as a substrate. Addition of bisecting N-acetylglucosamine to CDH1/E-cadherin modulates CDH1 cell membrane location. Inhibits NeuAc-alpha-2,3-Gal-beta-1,4-GlcNAc- formation which modulates sialylation levels and plays a role in cell migration regulation. In brain, addition of bisecting N-acetylglucosamine to BACE1 blocks its lysosomal targeting in response to oxidative stress and further degradation which increases its location to early endosome and the APP cleavage. This Homo sapiens (Human) protein is Beta-1,4-mannosyl-glycoprotein 4-beta-N-acetylglucosaminyltransferase.